We begin with the raw amino-acid sequence, 668 residues long: Eukaryotic translation initiation factor 3 subunit L (668 aa).

Positions 1 to 17 are enriched in polar residues; that stretch reads MVADASQQGQSNGAAFN. The segment at 1–42 is disordered; it reads MVADASQQGQSNGAAFNQQQQYQQQQQRQLFGGEEEFGDEEE. Residues 18 to 32 are compositionally biased toward low complexity; it reads QQQQYQQQQQRQLFG. Over residues 33-42 the composition is skewed to acidic residues; that stretch reads GEEEFGDEEE. The PCI domain maps to 358 to 552; that stretch reads SFTHILVFIM…QVVNTSDLDF (195 aa). Residues 625-668 form a disordered region; sequence AGVKAGPPAFSQRSGGAGRSSVNKSAPAPAGAWGSSKPQPSVTA. Over residues 648–662 the composition is skewed to low complexity; the sequence is KSAPAPAGAWGSSKP.

Belongs to the eIF-3 subunit L family. Component of the eukaryotic translation initiation factor 3 (eIF-3) complex.

It is found in the cytoplasm. In terms of biological role, component of the eukaryotic translation initiation factor 3 (eIF-3) complex, which is involved in protein synthesis of a specialized repertoire of mRNAs and, together with other initiation factors, stimulates binding of mRNA and methionyl-tRNAi to the 40S ribosome. The eIF-3 complex specifically targets and initiates translation of a subset of mRNAs involved in cell proliferation. The chain is Eukaryotic translation initiation factor 3 subunit L from Mycosarcoma maydis (Corn smut fungus).